Here is a 562-residue protein sequence, read N- to C-terminus: Glutamine--tRNA ligase (562 aa).

The short motif at 35–45 is the 'HIGH' region element; sequence PEPNGYLHIGH. ATP contacts are provided by residues 36-38 and 42-48; these read EPN and HIGHAKS. Residues aspartate 68 and tyrosine 213 each contribute to the L-glutamine site. ATP contacts are provided by residues threonine 232 and 264-265; that span reads RL. Residues 271–275 carry the 'KMSKS' region motif; the sequence is ITSKR.

It belongs to the class-I aminoacyl-tRNA synthetase family. In terms of assembly, monomer.

The protein resides in the cytoplasm. The enzyme catalyses tRNA(Gln) + L-glutamine + ATP = L-glutaminyl-tRNA(Gln) + AMP + diphosphate. The sequence is that of Glutamine--tRNA ligase from Neisseria meningitidis serogroup A / serotype 4A (strain DSM 15465 / Z2491).